Reading from the N-terminus, the 275-residue chain is NH(3)-dependent NAD(+) synthetase (275 aa).

47-54 (GISGGQDS) contributes to the ATP binding site. Residue D53 coordinates Mg(2+). R141 contributes to the deamido-NAD(+) binding site. T161 serves as a coordination point for ATP. E166 contributes to the Mg(2+) binding site. K174 and D181 together coordinate deamido-NAD(+). Residues K190 and T212 each contribute to the ATP site. 261 to 262 (HK) provides a ligand contact to deamido-NAD(+).

It belongs to the NAD synthetase family. As to quaternary structure, homodimer.

It carries out the reaction deamido-NAD(+) + NH4(+) + ATP = AMP + diphosphate + NAD(+) + H(+). Its pathway is cofactor biosynthesis; NAD(+) biosynthesis; NAD(+) from deamido-NAD(+) (ammonia route): step 1/1. Functionally, catalyzes the ATP-dependent amidation of deamido-NAD to form NAD. Uses ammonia as a nitrogen source. The polypeptide is NH(3)-dependent NAD(+) synthetase (Enterococcus faecalis (strain ATCC 700802 / V583)).